A 149-amino-acid chain; its full sequence is Large ribosomal subunit protein bL9 (149 aa).

The protein belongs to the bacterial ribosomal protein bL9 family.

Functionally, binds to the 23S rRNA. This chain is Large ribosomal subunit protein bL9, found in Anaeromyxobacter dehalogenans (strain 2CP-1 / ATCC BAA-258).